Consider the following 234-residue polypeptide: Demethylmenaquinone methyltransferase (234 aa).

Residues threonine 58, aspartate 79, and asparagine 106–alanine 107 contribute to the S-adenosyl-L-methionine site.

The protein belongs to the class I-like SAM-binding methyltransferase superfamily. MenG/UbiE family.

It carries out the reaction a 2-demethylmenaquinol + S-adenosyl-L-methionine = a menaquinol + S-adenosyl-L-homocysteine + H(+). Its pathway is quinol/quinone metabolism; menaquinone biosynthesis; menaquinol from 1,4-dihydroxy-2-naphthoate: step 2/2. Functionally, methyltransferase required for the conversion of demethylmenaquinol (DMKH2) to menaquinol (MKH2). The sequence is that of Demethylmenaquinone methyltransferase from Geobacillus kaustophilus (strain HTA426).